The following is a 424-amino-acid chain: Phosphomethylpyrimidine synthase (424 aa).

Substrate is bound by residues Met94, Tyr123, His162, 184-186 (SRG), 225-228 (NGMR), and Glu264. His268 lines the Zn(2+) pocket. Tyr291 is a substrate binding site. His332 provides a ligand contact to Zn(2+). [4Fe-4S] cluster is bound by residues Cys406, Cys409, and Cys413.

It belongs to the ThiC family. Requires [4Fe-4S] cluster as cofactor.

The enzyme catalyses 5-amino-1-(5-phospho-beta-D-ribosyl)imidazole + S-adenosyl-L-methionine = 4-amino-2-methyl-5-(phosphooxymethyl)pyrimidine + CO + 5'-deoxyadenosine + formate + L-methionine + 3 H(+). It functions in the pathway cofactor biosynthesis; thiamine diphosphate biosynthesis. Functionally, catalyzes the synthesis of the hydroxymethylpyrimidine phosphate (HMP-P) moiety of thiamine from aminoimidazole ribotide (AIR) in a radical S-adenosyl-L-methionine (SAM)-dependent reaction. This is Phosphomethylpyrimidine synthase from Methanoculleus marisnigri (strain ATCC 35101 / DSM 1498 / JR1).